Here is a 175-residue protein sequence, read N- to C-terminus: NADH-ubiquinone oxidoreductase chain 6 (175 aa).

A run of 5 helical transmembrane segments spans residues 1–21, 27–47, 49–69, 88–108, and 149–169; these read MMTYIVFILSTVFVVGFVGFS, VYGGVGLIVSGGVGCGIIMNF, GSFLGLMVFLIYLGGMMVVFG, VVFGAFVFGLFMEMLLVLYVL, and YGMWLVVVTGWSLFIAVVVVM.

This sequence belongs to the complex I subunit 6 family. In terms of assembly, core subunit of respiratory chain NADH dehydrogenase (Complex I) which is composed of 45 different subunits.

The protein localises to the mitochondrion inner membrane. It carries out the reaction a ubiquinone + NADH + 5 H(+)(in) = a ubiquinol + NAD(+) + 4 H(+)(out). Functionally, core subunit of the mitochondrial membrane respiratory chain NADH dehydrogenase (Complex I) which catalyzes electron transfer from NADH through the respiratory chain, using ubiquinone as an electron acceptor. Essential for the catalytic activity and assembly of complex I. The sequence is that of NADH-ubiquinone oxidoreductase chain 6 (MT-ND6) from Pteropus scapulatus (Little red flying fox).